We begin with the raw amino-acid sequence, 71 residues long: Small ribosomal subunit protein bS21 (71 aa).

Belongs to the bacterial ribosomal protein bS21 family.

This is Small ribosomal subunit protein bS21 from Acidithiobacillus ferrooxidans (strain ATCC 23270 / DSM 14882 / CIP 104768 / NCIMB 8455) (Ferrobacillus ferrooxidans (strain ATCC 23270)).